The chain runs to 407 residues: MTSGEQAKTPLQAPILLTNVKPVGFGKGASQSSTDILIGGDGKIAAVGSALQAPADTQRIDAKGAFISPGWVDLHVHIWHGGTDISIRPSECGAERGVTTLVDAGSAGEANFHGFREYIIEPSRERIKAFLNLGSIGLVACNRVPELRDIKDIDLDRILECYAENSEHIVGLKVRASHVITGSWGVTPVKLGKKIAKILKVPMMVHVGEPPALYDEVLEILGPGDVVTHCFNGKSGSSIMEDEDLFNLAERCAGEGIRLDIGHGGASFSFKVAEAAIARGLLPFSISTDLHGHSMNFPVWDLATTMSKLLSVDMPFENVVEAVTRNPASVIRLDMENRLDVGQRADFTVFDLVDADLEATDSNGDVSRLKRLFEPRYAVIGAEAIAASRYIPRARKLVRHSHGYSWR.

Zn(2+)-binding residues include histidine 75, histidine 77, lysine 173, histidine 206, histidine 229, and aspartate 289. N6-carboxylysine is present on lysine 173.

The protein belongs to the metallo-dependent hydrolases superfamily. Atu3266/EF_0837 deacetylase family. As to quaternary structure, homohexamer, dimer of trimers. The cofactor is Zn(2+).

Its function is as follows. Esterase that catalyzes the deacetylation of acetyl-(R)-mandelate (in vitro). Can also hydrolyze acetyl glycolate, but with lower efficiency. Has very low N-acetyl-D-amino acid deacetylase activity with N-acetyl-D-serine and N-acetyl-D-threonine (in vitro). Theoretical substrate docking studies suggest that other N-acetylated amino acids may optimally occupy the active site and may in fact be the physiological substrates. In Agrobacterium fabrum (strain C58 / ATCC 33970) (Agrobacterium tumefaciens (strain C58)), this protein is Deacetylase Atu3266.